The chain runs to 110 residues: METIAKHRYARTSAQKARLVADLIRGKKVAQALEILTFTNKKAAALVKKVLESAIANAEHNDGADVDDLKVAKIFVDEGPSMKRVMPRAKGRADRILKRTSHITVVVSDR.

Belongs to the universal ribosomal protein uL22 family. As to quaternary structure, part of the 50S ribosomal subunit.

Its function is as follows. This protein binds specifically to 23S rRNA; its binding is stimulated by other ribosomal proteins, e.g. L4, L17, and L20. It is important during the early stages of 50S assembly. It makes multiple contacts with different domains of the 23S rRNA in the assembled 50S subunit and ribosome. In terms of biological role, the globular domain of the protein is located near the polypeptide exit tunnel on the outside of the subunit, while an extended beta-hairpin is found that lines the wall of the exit tunnel in the center of the 70S ribosome. The protein is Large ribosomal subunit protein uL22 of Actinobacillus pleuropneumoniae serotype 5b (strain L20).